The chain runs to 190 residues: Glutathione peroxidase 2 (190 aa).

The active site involves Sec40. Position 40 (Sec40) is a non-standard amino acid, selenocysteine.

It belongs to the glutathione peroxidase family. Homotetramer.

Its subcellular location is the cytoplasm. The protein localises to the cytosol. It catalyses the reaction 2 glutathione + H2O2 = glutathione disulfide + 2 H2O. The catalysed reaction is a hydroperoxy polyunsaturated fatty acid + 2 glutathione = a hydroxy polyunsaturated fatty acid + glutathione disulfide + H2O. The enzyme catalyses tert-butyl hydroperoxide + 2 glutathione = tert-butanol + glutathione disulfide + H2O. It carries out the reaction cumene hydroperoxide + 2 glutathione = 2-phenylpropan-2-ol + glutathione disulfide + H2O. It catalyses the reaction (13S)-hydroperoxy-(9Z,11E)-octadecadienoate + 2 glutathione = (13S)-hydroxy-(9Z,11E)-octadecadienoate + glutathione disulfide + H2O. The catalysed reaction is (5S)-hydroperoxy-(6E,8Z,11Z,14Z)-eicosatetraenoate + 2 glutathione = (5S)-hydroxy-(6E,8Z,11Z,14Z)-eicosatetraenoate + glutathione disulfide + H2O. The enzyme catalyses (12R)-hydroperoxy-(5Z,8Z,10E,14Z)-eicosatetraenoate + 2 glutathione = (12R)-hydroxy-(5Z,8Z,10E,14Z)-eicosatetraenoate + glutathione disulfide + H2O. It carries out the reaction (15S)-hydroperoxy-(5Z,8Z,11Z,13E)-eicosatetraenoate + 2 glutathione = (15S)-hydroxy-(5Z,8Z,11Z,13E)-eicosatetraenoate + glutathione disulfide + H2O. Catalyzes the reduction of hydroperoxides in a glutathione-dependent manner thus regulating cellular redox homeostasis. Can reduce small soluble hydroperoxides such as H2O2, cumene hydroperoxide and tert-butyl hydroperoxide, as well as several fatty acid-derived hydroperoxides. Cannot reduce phosphatidycholine hydroperoxide. This chain is Glutathione peroxidase 2 (GPX2), found in Pongo pygmaeus (Bornean orangutan).